The following is a 290-amino-acid chain: 2-phosphoglycerate kinase (290 aa).

In terms of domain architecture, ATP-cone spans 1–89 (MIIVTDSERK…FWRELRRRKV (89 aa)).

This sequence belongs to the 2-phosphoglycerate kinase family. A divalent metal cation is required as a cofactor.

It catalyses the reaction (2R)-2-phosphoglycerate + ATP = (2R)-2,3-bisphosphoglycerate + ADP + H(+). Its pathway is thermoadapter biosynthesis; cyclic 2,3-diphosphoglycerate biosynthesis; cyclic 2,3-diphosphoglycerate from 2-phospho-D-glycerate: step 1/2. Functionally, catalyzes the phosphorylation of 2-phosphoglycerate to 2,3-diphosphoglycerate. Involved in the biosynthesis of cyclic 2,3-bisphosphoglycerate, a thermoprotectant. The polypeptide is 2-phosphoglycerate kinase (Thermococcus kodakarensis (strain ATCC BAA-918 / JCM 12380 / KOD1) (Pyrococcus kodakaraensis (strain KOD1))).